Consider the following 502-residue polypeptide: Acetyl-coenzyme A carboxylase carboxyl transferase subunit beta, chloroplastic (502 aa).

Residues 191-202 (GSDSESSSIRTS) show a composition bias toward low complexity. The disordered stretch occupies residues 191 to 212 (GSDSESSSIRTSGNDSNFNVRE). The 272-residue stretch at 226–497 (LWVQCENCYE…NQNSSGARGS (272 aa)) folds into the CoA carboxyltransferase N-terminal domain. Zn(2+)-binding residues include Cys230, Cys233, Cys249, and Cys252. The segment at 230–252 (CENCYELNYRSFFRSKMNICEQC) adopts a C4-type zinc-finger fold.

Belongs to the AccD/PCCB family. Acetyl-CoA carboxylase is a heterohexamer composed of biotin carboxyl carrier protein, biotin carboxylase and 2 subunits each of ACCase subunit alpha and ACCase plastid-coded subunit beta (accD). The cofactor is Zn(2+).

Its subcellular location is the plastid. The protein resides in the chloroplast stroma. The catalysed reaction is N(6)-carboxybiotinyl-L-lysyl-[protein] + acetyl-CoA = N(6)-biotinyl-L-lysyl-[protein] + malonyl-CoA. The protein operates within lipid metabolism; malonyl-CoA biosynthesis; malonyl-CoA from acetyl-CoA: step 1/1. In terms of biological role, component of the acetyl coenzyme A carboxylase (ACC) complex. Biotin carboxylase (BC) catalyzes the carboxylation of biotin on its carrier protein (BCCP) and then the CO(2) group is transferred by the transcarboxylase to acetyl-CoA to form malonyl-CoA. The polypeptide is Acetyl-coenzyme A carboxylase carboxyl transferase subunit beta, chloroplastic (Chloranthus spicatus (Chulantree)).